Reading from the N-terminus, the 226-residue chain is Deoxyribose-phosphate aldolase (226 aa).

Asp94 serves as the catalytic Proton donor/acceptor. Catalysis depends on Lys156, which acts as the Schiff-base intermediate with acetaldehyde. Lys185 (proton donor/acceptor) is an active-site residue.

Belongs to the DeoC/FbaB aldolase family. DeoC type 1 subfamily.

Its subcellular location is the cytoplasm. The catalysed reaction is 2-deoxy-D-ribose 5-phosphate = D-glyceraldehyde 3-phosphate + acetaldehyde. It participates in carbohydrate degradation; 2-deoxy-D-ribose 1-phosphate degradation; D-glyceraldehyde 3-phosphate and acetaldehyde from 2-deoxy-alpha-D-ribose 1-phosphate: step 2/2. In terms of biological role, catalyzes a reversible aldol reaction between acetaldehyde and D-glyceraldehyde 3-phosphate to generate 2-deoxy-D-ribose 5-phosphate. The protein is Deoxyribose-phosphate aldolase of Burkholderia lata (strain ATCC 17760 / DSM 23089 / LMG 22485 / NCIMB 9086 / R18194 / 383).